The primary structure comprises 428 residues: Leucine-rich repeat-containing protein 42 (428 aa).

5 LRR repeats span residues 149–170 (VLCS…EEIK), 174–195 (ELTC…LEHL), 202–222 (SVTQ…RKMT), 234–255 (NLSL…GYLF), and 259–280 (KLNC…KHKL). The disordered stretch occupies residues 379–412 (KHEALSSQESKKSKKRAFEEPEKEQGSSSQTSKQ). Residues 394–403 (RAFEEPEKEQ) show a composition bias toward basic and acidic residues. Phosphoserine is present on residues Ser-406 and Ser-407.

It belongs to the LRRC42 family.

This is Leucine-rich repeat-containing protein 42 (LRRC42) from Bos taurus (Bovine).